The primary structure comprises 988 residues: DNA-binding protein SMUBP-2 (988 aa).

Ala-2 carries the post-translational modification N-acetylalanine. Residues 213–220, Gln-402, Tyr-441, and Glu-570 each bind ATP; that span reads GPPGTGKT. The SS DNA-binding stretch occupies residues 637–783; the sequence is TAFEYLDDIV…KARHITVSRR (147 aa). Disordered stretches follow at residues 651-722, 765-820, and 835-872; these read THEG…GGTD, LKHD…PHGS, and RQQG…ALPS. Residues 702-718 show a composition bias toward polar residues; sequence SQVQPQHSSKANGSDRT. An R3H domain is found at 721-784; the sequence is TDRTEHFRAM…ARHITVSRRS (64 aa). The span at 765–775 shows a compositional bias: basic and acidic residues; that stretch reads LKHDSTGEGKA. A phosphoserine mark is found at Ser-797 and Ser-800. The span at 802 to 817 shows a compositional bias: low complexity; sequence AQAEPEPQVEQPVGQP. Over residues 835–844 the composition is skewed to polar residues; that stretch reads RQQGCQAQSQ. A Nuclear localization signal motif is present at residues 857 to 861; sequence KKKKK. Residues 884-933 form an AN1-type zinc finger; that stretch reads VKADNTCSFTKCSASTTTLGQFCMHCSRRYCLSHHLPEIHGCGEKARAHA. Cys-890, Cys-895, Cys-906, Cys-909, Cys-914, His-917, His-923, and Cys-925 together coordinate Zn(2+). Residues 943–988 form a disordered region; sequence LYAGSGTKDRALDPAKRAQLQRKLDKKLGELSSQRTSKKKEKERGT. Over residues 949–971 the composition is skewed to basic and acidic residues; that stretch reads TKDRALDPAKRAQLQRKLDKKLG. The stretch at 957-986 forms a coiled coil; the sequence is AKRAQLQRKLDKKLGELSSQRTSKKKEKER.

This sequence belongs to the DNA2/NAM7 helicase family. Homooligomer. Interacts with RUVBL1. Interacts with RUVBL2. Interacts with GTF3C1. Interacts with ABT1. Interacts with ribosomes. As to expression, expressed in liver, skin, muscle, heart, brain, spleen and kidney.

The protein resides in the nucleus. It localises to the cytoplasm. Its subcellular location is the cell projection. It is found in the axon. It catalyses the reaction ATP + H2O = ADP + phosphate + H(+). 5' to 3' helicase that unwinds RNA and DNA duplexes in an ATP-dependent reaction. Specific to 5'-phosphorylated single-stranded guanine-rich sequences. May play a role in RNA metabolism, ribosome biogenesis or initiation of translation. May play a role in regulation of transcription. Interacts with tRNA-Tyr. This Rattus norvegicus (Rat) protein is DNA-binding protein SMUBP-2 (Ighmbp2).